Here is a 685-residue protein sequence, read N- to C-terminus: Mannan-binding lectin serine protease 2 (685 aa).

A signal peptide spans 1–19 (MRLLIVLGLLWSLVATLLG). The CUB 1 domain maps to 20–137 (SKWPEPVFGR…TGFEAFYAAE (118 aa)). Residues glutamate 67 and aspartate 75 each contribute to the Ca(2+) site. Cysteine 72 and cysteine 90 are oxidised to a cystine. N-linked (GlcNAc...) asparagine glycosylation occurs at asparagine 103. The Ca(2+) site is built by aspartate 120, serine 122, asparagine 123, aspartate 138, and valine 139. The EGF-like; calcium-binding domain maps to 138-181 (DVDECRTSLGDSVPCDHYCHNYLGGYYCSCRVGYILHQNKHTCS). Intrachain disulfides connect cysteine 152-cysteine 165, cysteine 167-cysteine 180, cysteine 184-cysteine 211, and cysteine 241-cysteine 259. (3R)-3-hydroxyasparagine is present on asparagine 158. Positions 159 and 162 each coordinate Ca(2+). A CUB 2 domain is found at 184 to 296 (CSGQVFTGRS…TGWKIHYTST (113 aa)). A glycan (N-linked (GlcNAc...) asparagine) is linked at asparagine 285. Sushi domains follow at residues 298–363 (QPCP…ECSI) and 364–431 (IDCG…VCKP). Cystine bridges form between cysteine 300/cysteine 348, cysteine 328/cysteine 361, cysteine 366/cysteine 411, cysteine 396/cysteine 429, cysteine 433/cysteine 551, cysteine 597/cysteine 617, and cysteine 628/cysteine 659. The Peptidase S1 domain occupies 444–683 (IIGGQPAKPG…YIPWIENIIN (240 aa)). Residues histidine 482 and aspartate 531 each act as charge relay system in the active site. Catalysis depends on serine 632, which acts as the Charge relay system. An N-linked (GlcNAc...) asparagine glycan is attached at asparagine 641.

Belongs to the peptidase S1 family. Homodimer; disulfide-linked. Binds MBL2. Isoform 2 binds to MASP1. Binds SERPING1. Post-translationally, N-glycosylated. The iron and 2-oxoglutarate dependent 3-hydroxylation of aspartate and asparagine is (R) stereospecific within EGF domains. Highly expressed in liver. Secreted in plasma.

It localises to the secreted. It carries out the reaction Selective cleavage after Arg-223 in complement component C2 (-Ser-Leu-Gly-Arg-|-Lys-Ile-Gln-Ile) and after Arg-76 in complement component C4 (-Gly-Leu-Gln-Arg-|-Ala-Leu-Glu-Ile).. Its function is as follows. Serum protease that plays an important role in the activation of the complement system via mannose-binding lectin. After activation by auto-catalytic cleavage it cleaves C2 and C4, leading to their activation and to the formation of C3 convertase. The chain is Mannan-binding lectin serine protease 2 (Masp2) from Rattus norvegicus (Rat).